Here is a 303-residue protein sequence, read N- to C-terminus: Pyridoxal 5'-phosphate synthase subunit PdxS (303 aa).

Asp33 provides a ligand contact to D-ribose 5-phosphate. Residue Lys90 is the Schiff-base intermediate with D-ribose 5-phosphate of the active site. Residue Gly162 coordinates D-ribose 5-phosphate. Arg174 lines the D-glyceraldehyde 3-phosphate pocket. D-ribose 5-phosphate is bound by residues Gly223 and 244–245; that span reads GS.

It belongs to the PdxS/SNZ family. In terms of assembly, in the presence of PdxT, forms a dodecamer of heterodimers.

The enzyme catalyses aldehydo-D-ribose 5-phosphate + D-glyceraldehyde 3-phosphate + L-glutamine = pyridoxal 5'-phosphate + L-glutamate + phosphate + 3 H2O + H(+). Its pathway is cofactor biosynthesis; pyridoxal 5'-phosphate biosynthesis. In terms of biological role, catalyzes the formation of pyridoxal 5'-phosphate from ribose 5-phosphate (RBP), glyceraldehyde 3-phosphate (G3P) and ammonia. The ammonia is provided by the PdxT subunit. Can also use ribulose 5-phosphate and dihydroxyacetone phosphate as substrates, resulting from enzyme-catalyzed isomerization of RBP and G3P, respectively. The sequence is that of Pyridoxal 5'-phosphate synthase subunit PdxS from Streptomyces coelicolor (strain ATCC BAA-471 / A3(2) / M145).